A 205-amino-acid chain; its full sequence is Proteasome subunit beta type-3 (205 aa).

Ser-31 bears the Phosphoserine mark. A Glycyl lysine isopeptide (Lys-Gly) (interchain with G-Cter in ubiquitin) cross-link involves residue Lys-70.

This sequence belongs to the peptidase T1B family. The 26S proteasome consists of a 20S proteasome core and two 19S regulatory subunits. The 20S proteasome core is composed of 28 subunits that are arranged in four stacked rings, resulting in a barrel-shaped structure. The two end rings are each formed by seven alpha subunits, and the two central rings are each formed by seven beta subunits. The catalytic chamber with the active sites is on the inside of the barrel.

The protein resides in the cytoplasm. The protein localises to the nucleus. Non-catalytic component of the proteasome which degrades poly-ubiquitinated proteins in the cytoplasm and in the nucleus. It is essential for the regulated turnover of proteins and for the removal of misfolded proteins. The proteasome is a multicatalytic proteinase complex that is characterized by its ability to cleave peptides with Arg, Phe, Tyr, Leu, and Glu adjacent to the leaving group at neutral or slightly basic pH. It has an ATP-dependent proteolytic activity. This subunit may participate in the trypsin-like activity of the enzyme complex. The sequence is that of Proteasome subunit beta type-3 (PUP3) from Saccharomyces cerevisiae (strain ATCC 204508 / S288c) (Baker's yeast).